A 315-amino-acid chain; its full sequence is Solute carrier family 25 member 32 (315 aa).

Solcar repeat units lie at residues 20–109 (HVRY…IKSY), 118–209 (LEAT…LKLK), and 222–306 (LSTV…VSHF). 6 helical membrane-spanning segments follow: residues 26–43 (LIAGVSGGVLSNLALHPL), 89–106 (IWGAGLSWGLYFFFYNAI), 123–143 (YLVSAAEAGAMTLCITNPLWV), 186–203 (FVPGLFGTSHGALQFMAY), 227–243 (YISVAALSKIFAVAATY), and 281–300 (GIAPNLIRVTPACCITFVVY).

It belongs to the mitochondrial carrier (TC 2.A.29) family. Ubiquitous.

Its subcellular location is the mitochondrion inner membrane. It carries out the reaction FAD(in) = FAD(out). In terms of biological role, facilitates flavin adenine dinucleotide (FAD) translocation across the mitochondrial inner membrane into the mitochondrial matrix where it acts as a redox cofactor to assist flavoenzyme activities in fundamental metabolic processes including fatty acid beta-oxidation, amino acid and choline metabolism as well as mitochondrial electron transportation. In particular, provides FAD to DLD dehydrogenase of the glycine cleavage system, part of mitochondrial one-carbon metabolic pathway involved in neural tube closure in early embryogenesis. This Homo sapiens (Human) protein is Solute carrier family 25 member 32.